We begin with the raw amino-acid sequence, 224 residues long: Biosynthetic peptidoglycan transglycosylase (224 aa).

Residues 9 to 29 (VLILVSFVLLIQLWIFCSLAW) form a helical membrane-spanning segment.

It belongs to the glycosyltransferase 51 family.

The protein resides in the cell inner membrane. The enzyme catalyses [GlcNAc-(1-&gt;4)-Mur2Ac(oyl-L-Ala-gamma-D-Glu-L-Lys-D-Ala-D-Ala)](n)-di-trans,octa-cis-undecaprenyl diphosphate + beta-D-GlcNAc-(1-&gt;4)-Mur2Ac(oyl-L-Ala-gamma-D-Glu-L-Lys-D-Ala-D-Ala)-di-trans,octa-cis-undecaprenyl diphosphate = [GlcNAc-(1-&gt;4)-Mur2Ac(oyl-L-Ala-gamma-D-Glu-L-Lys-D-Ala-D-Ala)](n+1)-di-trans,octa-cis-undecaprenyl diphosphate + di-trans,octa-cis-undecaprenyl diphosphate + H(+). It functions in the pathway cell wall biogenesis; peptidoglycan biosynthesis. Its function is as follows. Peptidoglycan polymerase that catalyzes glycan chain elongation from lipid-linked precursors. This Acinetobacter baylyi (strain ATCC 33305 / BD413 / ADP1) protein is Biosynthetic peptidoglycan transglycosylase.